Here is a 47-residue protein sequence, read N- to C-terminus: Lysis protein for colicins E2 and E3 (47 aa).

The signal sequence occupies residues 1–19 (MKKITGIILLLLAVIILSA). Residue Cys-20 is the site of N-palmitoyl cysteine attachment. A lipid anchor (S-diacylglycerol cysteine) is attached at Cys-20.

The protein resides in the cell outer membrane. In terms of biological role, lysis proteins are required for both colicin release and partial cell lysis. The protein is Lysis protein for colicins E2 and E3 (hic) of Escherichia coli.